A 159-amino-acid chain; its full sequence is Transcription elongation factor GreA (159 aa).

The protein belongs to the GreA/GreB family.

In terms of biological role, necessary for efficient RNA polymerase transcription elongation past template-encoded arresting sites. The arresting sites in DNA have the property of trapping a certain fraction of elongating RNA polymerases that pass through, resulting in locked ternary complexes. Cleavage of the nascent transcript by cleavage factors such as GreA or GreB allows the resumption of elongation from the new 3'terminus. GreA releases sequences of 2 to 3 nucleotides. In Orientia tsutsugamushi (strain Ikeda) (Rickettsia tsutsugamushi), this protein is Transcription elongation factor GreA.